A 22-amino-acid chain; its full sequence is FVDRNRIPRSNNGPKIPIISNP.

Residues 1-22 (FVDRNRIPRSNNGPKIPIISNP) form a disordered region.

It is found in the secreted. Antibacterial peptide active against Gram-positive bacterium M.luteus and Gram-negative bacterium E.coli. The sequence is that of Proline-rich peptide from Calliphora vicina (Blue blowfly).